A 149-amino-acid chain; its full sequence is MAAKVEPFWIRKTLDQLDHEEWESLCDGCGLCCLQKLEDEEDNSVYYTRIACKLLDLKTCQCSDYPNRMKFVPDCIQLTPGQAEEFKWLPPTCGYRLVSEGKDLPLWHHLVCGDRDAVHHERISQSGRMLAEGSVPEDDWEDHLIFRAG.

It belongs to the UPF0260 family.

This chain is UPF0260 protein Pfl01_1392, found in Pseudomonas fluorescens (strain Pf0-1).